Here is a 441-residue protein sequence, read N- to C-terminus: Transcriptional regulatory protein ZraR (441 aa).

The region spanning 7 to 121 (DILVVDDDVS…RLQETLEKAL (115 aa)) is the Response regulatory domain. A 4-aspartylphosphate modification is found at Asp-56. Positions 141-370 (MIGSSPAMQH…LENAIERAVV (230 aa)) constitute a Sigma-54 factor interaction domain. 4 residues coordinate ATP: Gly-172, Thr-173, Arg-329, and Arg-359. The segment at residues 421 to 440 (KTEAARQLGITRKTLLAKLS) is a DNA-binding region (H-T-H motif).

In terms of processing, phosphorylated by ZraS.

The protein localises to the cytoplasm. Activity of the ZraS/ZraR two-component system is repressed by the zinc-bound form of ZraP, which probably interacts with the periplasmic region of ZraS. Part of the Zra signaling pathway, an envelope stress response (ESR) system composed of the periplasmic accessory protein ZraP, the histidine kinase ZraS and the transcriptional regulator ZraR. The ZraPSR system contributes to antibiotic resistance and is important for membrane integrity in the presence of membrane-targeting biocides. ZraR is a member of the two-component regulatory system ZraS/ZraR. When activated by ZraS, acts in conjunction with sigma-54 to regulate the expression of zraP in the presence of high Zn(2+) or Pb(2+) concentrations. Also positively autoregulates the expression of the zraSR operon. This Salmonella typhi protein is Transcriptional regulatory protein ZraR (zraR).